The primary structure comprises 261 residues: Pyridoxine-5'-phosphate oxidase (261 aa).

42–45 (RGDR) contacts pyridoxal 5'-phosphate. 95 to 98 (RMLL) contributes to the FMN binding site. Lys-100 is a binding site for pyridoxal 5'-phosphate. FMN contacts are provided by residues 110 to 111 (FT), 116 to 117 (RK), and Gln-139. 3 residues coordinate pyridoxal 5'-phosphate: Tyr-157, Arg-161, and Ser-165. FMN-binding positions include 174-175 (QS) and Trp-219. 225 to 227 (RLH) contributes to the pyridoxal 5'-phosphate binding site. Arg-229 contacts FMN. Thr-238 bears the Phosphothreonine mark. Ser-241 carries the post-translational modification Phosphoserine.

The protein belongs to the pyridoxamine 5'-phosphate oxidase family. In terms of assembly, homodimer. FMN is required as a cofactor. As to expression, detected in adult liver.

The catalysed reaction is pyridoxamine 5'-phosphate + O2 + H2O = pyridoxal 5'-phosphate + H2O2 + NH4(+). It catalyses the reaction pyridoxine 5'-phosphate + O2 = pyridoxal 5'-phosphate + H2O2. Its pathway is cofactor metabolism; pyridoxal 5'-phosphate salvage; pyridoxal 5'-phosphate from pyridoxamine 5'-phosphate: step 1/1. It participates in cofactor metabolism; pyridoxal 5'-phosphate salvage; pyridoxal 5'-phosphate from pyridoxine 5'-phosphate: step 1/1. Functionally, catalyzes the oxidation of either pyridoxine 5'-phosphate (PNP) or pyridoxamine 5'-phosphate (PMP) into pyridoxal 5'-phosphate (PLP). In Rattus norvegicus (Rat), this protein is Pyridoxine-5'-phosphate oxidase (Pnpo).